Reading from the N-terminus, the 163-residue chain is 2-C-methyl-D-erythritol 2,4-cyclodiphosphate synthase (163 aa).

A divalent metal cation-binding residues include Asp-12 and His-14. Residues 12 to 14 (DVH) and 38 to 39 (HS) contribute to the 4-CDP-2-C-methyl-D-erythritol 2-phosphate site. His-46 is an a divalent metal cation binding site. 4-CDP-2-C-methyl-D-erythritol 2-phosphate-binding positions include 60-62 (DIG), 136-139 (TTSE), Phe-143, and Arg-146.

It belongs to the IspF family. In terms of assembly, homotrimer. The cofactor is a divalent metal cation.

The enzyme catalyses 4-CDP-2-C-methyl-D-erythritol 2-phosphate = 2-C-methyl-D-erythritol 2,4-cyclic diphosphate + CMP. It participates in isoprenoid biosynthesis; isopentenyl diphosphate biosynthesis via DXP pathway; isopentenyl diphosphate from 1-deoxy-D-xylulose 5-phosphate: step 4/6. Its function is as follows. Involved in the biosynthesis of isopentenyl diphosphate (IPP) and dimethylallyl diphosphate (DMAPP), two major building blocks of isoprenoid compounds. Catalyzes the conversion of 4-diphosphocytidyl-2-C-methyl-D-erythritol 2-phosphate (CDP-ME2P) to 2-C-methyl-D-erythritol 2,4-cyclodiphosphate (ME-CPP) with a corresponding release of cytidine 5-monophosphate (CMP). This chain is 2-C-methyl-D-erythritol 2,4-cyclodiphosphate synthase, found in Xanthomonas oryzae pv. oryzae (strain MAFF 311018).